A 520-amino-acid chain; its full sequence is Glucose-6-phosphate isomerase (520 aa).

The active-site Proton donor is Glu-327. Active-site residues include His-358 and Lys-486.

The protein belongs to the GPI family.

It localises to the cytoplasm. The enzyme catalyses alpha-D-glucose 6-phosphate = beta-D-fructose 6-phosphate. It functions in the pathway carbohydrate biosynthesis; gluconeogenesis. It participates in carbohydrate degradation; glycolysis; D-glyceraldehyde 3-phosphate and glycerone phosphate from D-glucose: step 2/4. Its function is as follows. Catalyzes the reversible isomerization of glucose-6-phosphate to fructose-6-phosphate. The sequence is that of Glucose-6-phosphate isomerase from Bordetella avium (strain 197N).